We begin with the raw amino-acid sequence, 562 residues long: Arginine--tRNA ligase (562 aa).

The 'HIGH' region motif lies at 121 to 131 (PNIAKPFSVGH).

Belongs to the class-I aminoacyl-tRNA synthetase family. In terms of assembly, monomer.

It localises to the cytoplasm. The enzyme catalyses tRNA(Arg) + L-arginine + ATP = L-arginyl-tRNA(Arg) + AMP + diphosphate. The sequence is that of Arginine--tRNA ligase from Streptococcus suis (strain 98HAH33).